Reading from the N-terminus, the 1075-residue chain is Disheveled-associated activator of morphogenesis 2 (1075 aa).

Residues 40–416 form the GBD/FH3 domain; that stretch reads VPIPPTEELN…QIVLQDERGD (377 aa). Residues 437-517 are a coiled coil; that stretch reads NENEVKQWRD…VAQLNEYSQG (81 aa). Disordered regions lie at residues 517–611, 1006–1025, and 1048–1075; these read GGSI…IPQP, KEQR…SISE, and SKLK…KLNY. Residues 523-532 show a composition bias toward pro residues; that stretch reads PAPPPPPPGG. Low complexity predominate over residues 533 to 544; sequence PLALSSALSSAL. Positions 550–581 are enriched in pro residues; it reads PPLPPPLPFSSCPPPPAPPPPPGGPPPPPGAP. The FH2 domain occupies 605-1075; the sequence is KKSIPQPSHP…RERVVTKLNY (471 aa). Residues 1025–1075 enclose the DAD domain; it reads EETGEFDDLVSALRSGEVFDKDLSKLKRNRKRSGNQGLETSRERVVTKLNY. Residues 1064-1075 are compositionally biased toward basic and acidic residues; sequence TSRERVVTKLNY.

It belongs to the formin homology family. In terms of tissue distribution, expressed in progenitor populations of the embryonic spinal cord (at protein level).

Its function is as follows. Key regulator of the Wnt signaling pathway, which is required for various processes during development, such as dorsal patterning, determination of left/right symmetry or myelination in the central nervous system. Acts downstream of Wnt ligands and upstream of beta-catenin (CTNNB1). Required for canonical Wnt signaling pathway during patterning in the dorsal spinal cord by promoting the aggregation of Disheveled (Dvl) complexes, thereby clustering and formation of Wnt receptor signalosomes and potentiating Wnt activity. During dorsal patterning of the spinal cord, inhibits oligodendrocytes differentiation via interaction with PIP5K1A. Also regulates non-canonical Wnt signaling pathway. Acts downstream of PITX2 in the developing gut and is required for left/right asymmetry within dorsal mesentery: affects mesenchymal condensation by lengthening cadherin-based junctions through WNT5A and non-canonical Wnt signaling, inducing polarized condensation in the left dorsal mesentery necessary to initiate gut rotation. Together with DAAM1, required for myocardial maturation and sarcomere assembly. This Gallus gallus (Chicken) protein is Disheveled-associated activator of morphogenesis 2.